The chain runs to 266 residues: Type II iodothyronine deiodinase (266 aa).

Topologically, residues 1–9 (MGLLSVDLL) are lumenal. Residues 10 to 34 (ITLQILPVFFSNCLFLALYDSVILL) form a helical; Signal-anchor for type III membrane protein membrane-spanning segment. Over 35–266 (KHVALLLSRS…KNFSKRUILD (232 aa)) the chain is Cytoplasmic. Residue Sec130 is part of the active site. 2 non-standard amino acids (selenocysteine) are found at residues Sec130 and Sec263.

It belongs to the iodothyronine deiodinase family. In terms of assembly, predominantly monomer. Can form homodimers but homodimerization is not essential for enzyme activity. Interacts with USP20 and USP33. Interacts with MARCHF6. In terms of processing, ubiquitinated by MARCHF6, leading to its degradation by the proteasome. Deubiquitinated by USP20 and USP33. As to expression, expressed in cerebral cortex, cerebellum, pituitary gland, mostly in anterior pituitary gland, and pineal gland, as well as in brown adipose tissue (BAT).

It localises to the endoplasmic reticulum membrane. The enzyme catalyses 3,3',5-triiodo-L-thyronine + iodide + A + H(+) = L-thyroxine + AH2. It carries out the reaction 3,3'-diiodo-L-thyronine + iodide + A + H(+) = 3,3',5'-triiodo-L-thyronine + AH2. It catalyses the reaction 3'-iodo-L-thyronine + iodide + A + H(+) = 3',5'-diiodo-L-thyronine + AH2. The catalysed reaction is 3,3'-diiodothyronamine + iodide + A + H(+) = 3,3',5'-triiodothyronamine + AH2. The enzyme catalyses 3'-iodothyronamine + iodide + A + H(+) = 3',5'-diiodothyronamine + AH2. In terms of biological role, plays a crucial role in the metabolism of thyroid hormones (TH) and has specific roles in TH activation and inactivation by deiodination. Catalyzes the deiodination of L-thyroxine (T4) to 3,5,3'-triiodothyronine (T3) and 3',5'-diiodothyronine (3',5'-T2) to 3'-monoiodothyronine (3'-T1) via outer-ring deiodination (ORD). Catalyzes the deiodination of 3,3',5'-triiodothyronine (rT3) to 3,3'-diiodothyronine (3,3'-T2) via ORD. Catalyzes the phenolic ring deiodinations of 3,3',5'-triiodothyronamine and 3',5'- diiodothyronamine. In Rattus norvegicus (Rat), this protein is Type II iodothyronine deiodinase (Dio2).